Consider the following 278-residue polypeptide: HTH-type transcriptional activator RhaS (278 aa).

The HTH araC/xylS-type domain maps to 174 to 272 (NLLLAWLEDH…NWSPRDIRQG (99 aa)). 2 DNA-binding regions (H-T-H motif) span residues 191–212 (DAVA…KQQT) and 239–262 (VTDI…RREF).

In terms of assembly, binds DNA as a dimer.

The protein resides in the cytoplasm. Functionally, activates expression of the rhaBAD and rhaT operons. The protein is HTH-type transcriptional activator RhaS of Shigella boydii serotype 4 (strain Sb227).